A 482-amino-acid chain; its full sequence is Succinate-semialdehyde dehydrogenase [NADP(+)] GabD (482 aa).

Residues 156 to 157, 180 to 183, and 233 to 234 contribute to the NADP(+) site; these read WN, KPAS, and GS. Residue glutamate 255 is the Proton acceptor of the active site. An NADP(+)-binding site is contributed by leucine 256. The Nucleophile role is filled by cysteine 289. Glutamate 386 is an NADP(+) binding site.

This sequence belongs to the aldehyde dehydrogenase family. In terms of assembly, homotetramer.

It catalyses the reaction succinate semialdehyde + NADP(+) + H2O = succinate + NADPH + 2 H(+). The catalysed reaction is 5-oxopentanoate + NADP(+) + H2O = glutarate + NADPH + 2 H(+). It functions in the pathway amino-acid degradation; 4-aminobutanoate degradation. Its pathway is amino-acid degradation. Catalyzes the NADP(+)-dependent oxidation of succinate semialdehyde to succinate. Thereby functions in a GABA degradation pathway that allows some E.coli strains to utilize GABA as a nitrogen source for growth. Also catalyzes the conversion of glutarate semialdehyde to glutarate, as part of a L-lysine degradation pathway that proceeds via cadaverine, glutarate and L-2-hydroxyglutarate. In Escherichia coli (strain K12), this protein is Succinate-semialdehyde dehydrogenase [NADP(+)] GabD (gabD).